Reading from the N-terminus, the 79-residue chain is Ubiquinol-cytochrome c reductase complex assembly factor 5 (79 aa).

Topologically, residues 1–20 (MSPYSGSVRRLLDSWPGKKR) are mitochondrial matrix. The chain crosses the membrane as a helical span at residues 21 to 43 (FGVYRFLPLFFLLGAGLEFSMIN). Residues 44–79 (WTVGETNFYRTFKRRQAKNYVEEQQHLQARAANNTN) lie on the Mitochondrial intermembrane side of the membrane.

Belongs to the UQCC5 family. In terms of assembly, interacts with respiratory complex III components Uqcc1 and RFeSP; the interactions are probably involved in the assembly and stability of the mitochondrial ubiquinol-cytochrome c reductase complex. Interacts with sloth2; the interaction stabilizes both components. As to expression, expressed in the brain.

The protein localises to the mitochondrion inner membrane. It is found in the mitochondrion. Required for the assembly and stability of the mitochondrial ubiquinol-cytochrome c reductase complex (complex III (CIII) or cytochrome b-c1 complex), a multisubunit transmembrane complex that is part of the mitochondrial electron transport chain (ETC) which drives oxidative phosphorylation. The polypeptide is Ubiquinol-cytochrome c reductase complex assembly factor 5 (Drosophila melanogaster (Fruit fly)).